A 42-amino-acid polypeptide reads, in one-letter code: LPVNEAQCRQVGGYCGLRICNFPSRFLGLCTRNHPCCSRVWV.

3 cysteine pairs are disulfide-bonded: cysteine 8-cysteine 36, cysteine 15-cysteine 30, and cysteine 20-cysteine 37.

Its subcellular location is the secreted. In terms of biological role, has antibacterial activity against the Gram-positive bacterium S.aureus 1056 MRSA (MIC=11.48 ug/ml) and the Gram-negative bacterium E.coli O157:H7 (MIC=12.03 ug/ml). Does not have antifungal activity against the yeast C.albicans 3153A. This Struthio camelus (Common ostrich) protein is Ostricacin-4.